We begin with the raw amino-acid sequence, 344 residues long: Small ribosomal subunit protein bS1m (344 aa).

S327 is subject to Phosphoserine.

This sequence belongs to the bacterial ribosomal protein bS1 family. Component of the mitochondrial small ribosomal subunit (mt-SSU). Mature yeast 74S mitochondrial ribosomes consist of a small (37S) and a large (54S) subunit. The 37S small subunit contains a 15S ribosomal RNA (15S mt-rRNA) and 34 different proteins. The 54S large subunit contains a 21S rRNA (21S mt-rRNA) and 46 different proteins.

It localises to the mitochondrion. Functionally, component of the mitochondrial ribosome (mitoribosome), a dedicated translation machinery responsible for the synthesis of mitochondrial genome-encoded proteins, including at least some of the essential transmembrane subunits of the mitochondrial respiratory chain. The mitoribosomes are attached to the mitochondrial inner membrane and translation products are cotranslationally integrated into the membrane. bS1m functionally interacts with the 5'-UTR of mitochondrial mRNAs. The polypeptide is Small ribosomal subunit protein bS1m (MRP51) (Saccharomyces cerevisiae (strain ATCC 204508 / S288c) (Baker's yeast)).